Reading from the N-terminus, the 219-residue chain is Flagellin A (219 aa).

A propeptide spanning residues 1–12 (MKVKEFMNNKKG) is cleaved from the precursor. Asn38 and Asn175 each carry an N-linked (GlcNAc...) asparagine glycan.

Belongs to the archaeal flagellin family. Post-translationally, N-linked glycans consist of the 779 Da trisaccharide beta-ManNAc(Thr)-(1-4)-beta-GlcNAc3NAcA-(1-3)-beta-GlcNAc.

It localises to the archaeal flagellum. Flagellin is the subunit protein which polymerizes to form the filaments of archaeal flagella. The polypeptide is Flagellin A (flaA) (Methanococcus voltae).